The primary structure comprises 122 residues: Large ribosomal subunit protein uL14 (122 aa).

The protein belongs to the universal ribosomal protein uL14 family. Part of the 50S ribosomal subunit. Forms a cluster with proteins L3 and L19. In the 70S ribosome, L14 and L19 interact and together make contacts with the 16S rRNA in bridges B5 and B8.

In terms of biological role, binds to 23S rRNA. Forms part of two intersubunit bridges in the 70S ribosome. This Bacillus licheniformis (strain ATCC 14580 / DSM 13 / JCM 2505 / CCUG 7422 / NBRC 12200 / NCIMB 9375 / NCTC 10341 / NRRL NRS-1264 / Gibson 46) protein is Large ribosomal subunit protein uL14.